We begin with the raw amino-acid sequence, 142 residues long: Lutropin subunit beta (142 aa).

The N-terminal stretch at 1 to 21 (MEMLQGLLLLWLLLNVGGVWT) is a signal peptide. 6 cysteine pairs are disulfide-bonded: Cys-30-Cys-78, Cys-44-Cys-93, Cys-47-Cys-131, Cys-55-Cys-109, Cys-59-Cys-111, and Cys-114-Cys-121. The N-linked (GlcNAc...) asparagine glycan is linked to Asn-34.

The protein belongs to the glycoprotein hormones subunit beta family. As to quaternary structure, heterodimer of a common alpha chain and a unique beta chain which confers biological specificity to thyrotropin, lutropin, follitropin and gonadotropin.

It is found in the secreted. Functionally, promotes spermatogenesis and ovulation by stimulating the testes and ovaries to synthesize steroids. This chain is Lutropin subunit beta (LHB), found in Panthera tigris altaica (Siberian tiger).